Here is a 297-residue protein sequence, read N- to C-terminus: Probable GTP 3',8-cyclase (297 aa).

Positions 4–227 (RYGRQIRSFR…MQNRKKYVID (224 aa)) constitute a Radical SAM core domain. Arg-13 lines the GTP pocket. The [4Fe-4S] cluster site is built by Cys-20 and Cys-24. Tyr-26 serves as a coordination point for S-adenosyl-L-methionine. Residue Cys-27 participates in [4Fe-4S] cluster binding. GTP is bound at residue Lys-61. An S-adenosyl-L-methionine-binding site is contributed by Gly-65. Thr-91 contacts GTP. Ser-115 is a binding site for S-adenosyl-L-methionine. Lys-152 lines the GTP pocket. Residues Cys-243 and Cys-246 each contribute to the [4Fe-4S] cluster site. 248-250 (RIR) contributes to the GTP binding site. A [4Fe-4S] cluster-binding site is contributed by Cys-260.

This sequence belongs to the radical SAM superfamily. MoaA family. [4Fe-4S] cluster is required as a cofactor.

It carries out the reaction GTP + AH2 + S-adenosyl-L-methionine = (8S)-3',8-cyclo-7,8-dihydroguanosine 5'-triphosphate + 5'-deoxyadenosine + L-methionine + A + H(+). It functions in the pathway cofactor biosynthesis; molybdopterin biosynthesis. Its function is as follows. Catalyzes the cyclization of GTP to (8S)-3',8-cyclo-7,8-dihydroguanosine 5'-triphosphate. In Methanococcus maripaludis (strain DSM 14266 / JCM 13030 / NBRC 101832 / S2 / LL), this protein is Probable GTP 3',8-cyclase.